Here is a 465-residue protein sequence, read N- to C-terminus: Apolipoprotein N-acyltransferase (465 aa).

Transmembrane regions (helical) follow at residues 12 to 32 (AVLGGLLAGLAPGVAGPLSML), 49 to 69 (ALWGLFGVLLSHRWLLGLHPL), 80 to 100 (LPVAVAIWLSCGVAAALLLLL), 122 to 142 (LLALVWGAAELLLEGSPLFWI), 161 to 181 (WLGSGGLATLQLLWGWGLWQL), and 189 to 209 (CAWWLISLLLAHAMGALSLSP). Residues 221-448 (WQPAIPTREK…DAVAAAELQR (228 aa)) form the CN hydrolase domain. Glu-262 serves as the catalytic Proton acceptor. Lys-312 is a catalytic residue. Residue Cys-360 is the Nucleophile of the active site.

This sequence belongs to the CN hydrolase family. Apolipoprotein N-acyltransferase subfamily.

It localises to the cell inner membrane. The catalysed reaction is N-terminal S-1,2-diacyl-sn-glyceryl-L-cysteinyl-[lipoprotein] + a glycerophospholipid = N-acyl-S-1,2-diacyl-sn-glyceryl-L-cysteinyl-[lipoprotein] + a 2-acyl-sn-glycero-3-phospholipid + H(+). It participates in protein modification; lipoprotein biosynthesis (N-acyl transfer). Its function is as follows. Catalyzes the phospholipid dependent N-acylation of the N-terminal cysteine of apolipoprotein, the last step in lipoprotein maturation. The chain is Apolipoprotein N-acyltransferase from Parasynechococcus marenigrum (strain WH8102).